We begin with the raw amino-acid sequence, 167 residues long: I-Kappa-B like protein F2 (167 aa).

3 ANK repeats span residues 54–86 (HGKQ…DING), 91–121 (FGNT…NMGI), and 125–154 (LFKT…RCGV).

The protein belongs to the polydnaviridae I-Kappa-B-like protein family.

In terms of biological role, suppresses the host immune response through NF-kappa-B inactivation. Possesses ankyrin repeat domains required for NF-kappa-B binding but lacks the regulatory regions required for dissociation from NF-kappa-B and degradation. Therefore, prevents host NF-kappa-B release and subsequent activation. The protein is I-Kappa-B like protein F2 (F3) of Microplitis demolitor bracovirus (isolate Webb) (MdBV).